The sequence spans 159 residues: Putative polyketide cyclase (159 aa).

The protein to polyketide cyclases.

Its function is as follows. Involved in developmentally regulated synthesis of a compound biosynthetically related to polyketide antibiotics which is essential for spore color in Streptomyces coelicolor. This chain is Putative polyketide cyclase, found in Streptomyces coelicolor (strain ATCC BAA-471 / A3(2) / M145).